The chain runs to 292 residues: Acetyl-coenzyme A carboxylase carboxyl transferase subunit beta (292 aa).

A CoA carboxyltransferase N-terminal domain is found at Leu29–Asn292. Positions 33, 36, 52, and 55 each coordinate Zn(2+). A C4-type zinc finger spans residues Cys33 to Cys55.

It belongs to the AccD/PCCB family. In terms of assembly, acetyl-CoA carboxylase is a heterohexamer composed of biotin carboxyl carrier protein (AccB), biotin carboxylase (AccC) and two subunits each of ACCase subunit alpha (AccA) and ACCase subunit beta (AccD). The cofactor is Zn(2+).

The protein localises to the cytoplasm. It catalyses the reaction N(6)-carboxybiotinyl-L-lysyl-[protein] + acetyl-CoA = N(6)-biotinyl-L-lysyl-[protein] + malonyl-CoA. Its pathway is lipid metabolism; malonyl-CoA biosynthesis; malonyl-CoA from acetyl-CoA: step 1/1. In terms of biological role, component of the acetyl coenzyme A carboxylase (ACC) complex. Biotin carboxylase (BC) catalyzes the carboxylation of biotin on its carrier protein (BCCP) and then the CO(2) group is transferred by the transcarboxylase to acetyl-CoA to form malonyl-CoA. The protein is Acetyl-coenzyme A carboxylase carboxyl transferase subunit beta of Prochlorococcus marinus (strain MIT 9515).